The sequence spans 300 residues: Phosphatidylserine decarboxylase proenzyme (300 aa).

Active-site charge relay system; for autoendoproteolytic cleavage activity residues include aspartate 117, histidine 173, and serine 260. Serine 260 acts as the Schiff-base intermediate with substrate; via pyruvic acid; for decarboxylase activity in catalysis. Residue serine 260 is modified to Pyruvic acid (Ser); by autocatalysis.

It belongs to the phosphatidylserine decarboxylase family. PSD-B subfamily. Prokaryotic type II sub-subfamily. Heterodimer of a large membrane-associated beta subunit and a small pyruvoyl-containing alpha subunit. Requires pyruvate as cofactor. Post-translationally, is synthesized initially as an inactive proenzyme. Formation of the active enzyme involves a self-maturation process in which the active site pyruvoyl group is generated from an internal serine residue via an autocatalytic post-translational modification. Two non-identical subunits are generated from the proenzyme in this reaction, and the pyruvate is formed at the N-terminus of the alpha chain, which is derived from the carboxyl end of the proenzyme. The autoendoproteolytic cleavage occurs by a canonical serine protease mechanism, in which the side chain hydroxyl group of the serine supplies its oxygen atom to form the C-terminus of the beta chain, while the remainder of the serine residue undergoes an oxidative deamination to produce ammonia and the pyruvoyl prosthetic group on the alpha chain. During this reaction, the Ser that is part of the protease active site of the proenzyme becomes the pyruvoyl prosthetic group, which constitutes an essential element of the active site of the mature decarboxylase.

The protein resides in the cell membrane. It catalyses the reaction a 1,2-diacyl-sn-glycero-3-phospho-L-serine + H(+) = a 1,2-diacyl-sn-glycero-3-phosphoethanolamine + CO2. Its pathway is phospholipid metabolism; phosphatidylethanolamine biosynthesis; phosphatidylethanolamine from CDP-diacylglycerol: step 2/2. In terms of biological role, catalyzes the formation of phosphatidylethanolamine (PtdEtn) from phosphatidylserine (PtdSer). The polypeptide is Phosphatidylserine decarboxylase proenzyme (Fusobacterium nucleatum subsp. nucleatum (strain ATCC 25586 / DSM 15643 / BCRC 10681 / CIP 101130 / JCM 8532 / KCTC 2640 / LMG 13131 / VPI 4355)).